A 280-amino-acid polypeptide reads, in one-letter code: UPF0273 protein SSO1861 (280 aa).

One can recognise a KaiC domain in the interval 2–246 (KRVKTYIPGL…YLKISNWSVS (245 aa)). 29–36 (GGPGTGKS) lines the ATP pocket.

Belongs to the UPF0273 family.

The sequence is that of UPF0273 protein SSO1861 from Saccharolobus solfataricus (strain ATCC 35092 / DSM 1617 / JCM 11322 / P2) (Sulfolobus solfataricus).